A 281-amino-acid chain; its full sequence is Diaminopimelate epimerase (281 aa).

Positions 13 and 66 each coordinate substrate. The active-site Proton donor is Cys-75. Residues 76–77, Asn-164, Asn-197, and 215–216 each bind substrate; these read GN and ER. Cys-224 acts as the Proton acceptor in catalysis. 225-226 serves as a coordination point for substrate; it reads GT.

Belongs to the diaminopimelate epimerase family. As to quaternary structure, homodimer.

It is found in the cytoplasm. It carries out the reaction (2S,6S)-2,6-diaminopimelate = meso-2,6-diaminopimelate. It participates in amino-acid biosynthesis; L-lysine biosynthesis via DAP pathway; DL-2,6-diaminopimelate from LL-2,6-diaminopimelate: step 1/1. In terms of biological role, catalyzes the stereoinversion of LL-2,6-diaminopimelate (L,L-DAP) to meso-diaminopimelate (meso-DAP), a precursor of L-lysine and an essential component of the bacterial peptidoglycan. The chain is Diaminopimelate epimerase from Picosynechococcus sp. (strain ATCC 27264 / PCC 7002 / PR-6) (Agmenellum quadruplicatum).